The primary structure comprises 146 residues: UPF0735 ACT domain-containing protein CHY_1913 (146 aa).

Residues 70-145 (TLALNLEHRA…GVSKVELVGQ (76 aa)) enclose the ACT domain.

Belongs to the UPF0735 family.

The chain is UPF0735 ACT domain-containing protein CHY_1913 from Carboxydothermus hydrogenoformans (strain ATCC BAA-161 / DSM 6008 / Z-2901).